A 487-amino-acid polypeptide reads, in one-letter code: ATP-dependent 6-phosphofructokinase (487 aa).

Residues Gly-107, 173-174 (RG), 198-201 (GDGT), and Lys-226 contribute to the ATP site. Residue Asp-199 participates in Mg(2+) binding. Substrate-binding positions include 227-229 (TID), 272-274 (MGR), and Glu-325. The Proton acceptor role is filled by Asp-229. 341 to 343 (SGN) contributes to the ATP binding site. A substrate-binding site is contributed by 380–383 (YMIR). Residues 485-487 (AKL) carry the Peroxisomal targeting signal motif.

Belongs to the phosphofructokinase type A (PFKA) family. PPi-dependent PFK group II subfamily. Atypical ATP-dependent clade 'X' sub-subfamily. In terms of assembly, homotetramer. Requires Mg(2+) as cofactor.

It localises to the glycosome. It carries out the reaction beta-D-fructose 6-phosphate + ATP = beta-D-fructose 1,6-bisphosphate + ADP + H(+). The protein operates within carbohydrate degradation; glycolysis; D-glyceraldehyde 3-phosphate and glycerone phosphate from D-glucose: step 3/4. With respect to regulation, allosterically activated by AMP. In terms of biological role, catalyzes the phosphorylation of D-fructose 6-phosphate to fructose 1,6-bisphosphate by ATP, the first committing step of glycolysis. This chain is ATP-dependent 6-phosphofructokinase, found in Trypanosoma brucei brucei.